Consider the following 336-residue polypeptide: Sex determination protein tasselseed-2 (336 aa).

Residue 59 to 83 participates in NAD(+) binding; sequence IVTGGARGIGEAIVRLFAKHGARVV. Residue serine 194 participates in substrate binding. Tyrosine 207 acts as the Proton acceptor in catalysis.

The protein belongs to the short-chain dehydrogenases/reductases (SDR) family.

Its function is as follows. Required for stage-specific floral organ abortion. The polypeptide is Sex determination protein tasselseed-2 (TS2) (Zea mays (Maize)).